The sequence spans 300 residues: Protein sprouty homolog 4 (300 aa).

M1 is subject to N-acetylmethionine. 2 disordered regions span residues 1–28 and 52–114; these read MEPP…SRAP and DYID…RLLD. Low complexity-rich tracts occupy residues 7–21 and 92–108; these read QSSV…MVQP and SFSG…STSS. S126 carries the phosphoserine modification. Residues 167–274 enclose the SPR domain; the sequence is KCKECASPRT…GYDRLRRPGC (108 aa).

Belongs to the sprouty family. As to quaternary structure, interacts (via C-terminus) with TESK1 (via both C- and N-termini); the interaction inhibits TESK1 kinase activity. Interacts with RAF1. Interacts with CAV1 (via C-terminus). In terms of tissue distribution, expressed in the embryo and adult tissues including heart, brain, lung, kidney, and skeletal muscle.

Its subcellular location is the cytoplasm. The protein localises to the cell projection. It localises to the ruffle membrane. In terms of biological role, suppresses the insulin receptor and EGFR-transduced MAPK signaling pathway, but does not inhibit MAPK activation by a constitutively active mutant Ras. Probably impairs the formation of GTP-Ras. Inhibits Ras-independent, but not Ras-dependent, activation of RAF1. Represses integrin-mediated cell spreading via inhibition of TESK1-mediated phosphorylation of cofilin. This chain is Protein sprouty homolog 4 (Spry4), found in Mus musculus (Mouse).